The following is a 554-amino-acid chain: Intraflagellar transport protein 56 (554 aa).

The tract at residues 1-24 (MMLSRAKPAVGRGVQHTDKRKKKG) is disordered. TPR repeat units follow at residues 57–90 (EDTN…ENCN), 92–125 (EVWV…LQNR), 151–184 (TEDQ…NREY), and 468–501 (ANDC…EGKR).

The protein belongs to the IFT56 family. In terms of assembly, component of the IFT complex B. Interacts with IFT46; the interaction is direct.

It is found in the cell projection. The protein resides in the cilium. In terms of biological role, component of the intraflagellar transport (IFT) complex B required for transport of proteins in the motile cilium. Required for transport of specific ciliary cargo proteins related to motility, while it is neither required for IFT complex B assembly or motion nor for cilium assembly. Required for efficient coupling between the accumulation of GLI2 and GLI3 at the ciliary tips and their dissociation from the negative regulator SUFU. Plays a key role in maintaining the integrity of the IFT complex B and the proper ciliary localization of the IFT complex B components. Not required for IFT complex A ciliary localization or function. Essential for maintaining proper microtubule organization within the ciliary axoneme. This is Intraflagellar transport protein 56 from Homo sapiens (Human).